A 150-amino-acid polypeptide reads, in one-letter code: Ribosomal RNA large subunit methyltransferase H (150 aa).

S-adenosyl-L-methionine-binding positions include alanine 100 and 118 to 123 (LSEMTF).

The protein belongs to the RNA methyltransferase RlmH family. As to quaternary structure, homodimer.

It is found in the cytoplasm. The enzyme catalyses pseudouridine(1915) in 23S rRNA + S-adenosyl-L-methionine = N(3)-methylpseudouridine(1915) in 23S rRNA + S-adenosyl-L-homocysteine + H(+). Functionally, specifically methylates the pseudouridine at position 1915 (m3Psi1915) in 23S rRNA. This Helicobacter pylori (strain HPAG1) protein is Ribosomal RNA large subunit methyltransferase H.